A 531-amino-acid chain; its full sequence is Probable bifunctional methylthioribulose-1-phosphate dehydratase/enolase-phosphatase E1 2 (531 aa).

Residues 1–248 (MGVPSEGAVG…AIKLHQLGLD (248 aa)) form a methylthioribulose-1-phosphate dehydratase region. C120 contributes to the substrate binding site. The Zn(2+) site is built by H138 and H140. Residue E163 is the Proton donor/acceptor; for methylthioribulose-1-phosphate dehydratase activity of the active site. A Zn(2+)-binding site is contributed by H213. The tract at residues 292–531 (ILLDIEGTTT…FRTIETFLEI (240 aa)) is enolase-phosphatase E1. D295 and E297 together coordinate Mg(2+). Substrate-binding positions include 430–431 (SS) and K464. D490 lines the Mg(2+) pocket.

This sequence in the N-terminal section; belongs to the aldolase class II family. MtnB subfamily. It in the C-terminal section; belongs to the HAD-like hydrolase superfamily. MasA/MtnC family. Zn(2+) serves as cofactor. The cofactor is Mg(2+).

It carries out the reaction 5-(methylsulfanyl)-D-ribulose 1-phosphate = 5-methylsulfanyl-2,3-dioxopentyl phosphate + H2O. The enzyme catalyses 5-methylsulfanyl-2,3-dioxopentyl phosphate + H2O = 1,2-dihydroxy-5-(methylsulfanyl)pent-1-en-3-one + phosphate. Its pathway is amino-acid biosynthesis; L-methionine biosynthesis via salvage pathway; L-methionine from S-methyl-5-thio-alpha-D-ribose 1-phosphate: step 2/6. It participates in amino-acid biosynthesis; L-methionine biosynthesis via salvage pathway; L-methionine from S-methyl-5-thio-alpha-D-ribose 1-phosphate: step 3/6. It functions in the pathway amino-acid biosynthesis; L-methionine biosynthesis via salvage pathway; L-methionine from S-methyl-5-thio-alpha-D-ribose 1-phosphate: step 4/6. The polypeptide is Probable bifunctional methylthioribulose-1-phosphate dehydratase/enolase-phosphatase E1 2 (Vitis vinifera (Grape)).